The following is a 365-amino-acid chain: Protein-glutamate methylesterase/protein-glutamine glutaminase 2 (365 aa).

The Response regulatory domain occupies 6–123 (RVLIIDDSAS…ADSLSDDAMR (118 aa)). 4-aspartylphosphate is present on D57. The CheB-type methylesterase domain maps to 173–359 (AKTTEMVVCV…PLDQIAREVL (187 aa)). Catalysis depends on residues S185, H211, and D307.

It belongs to the CheB family. Post-translationally, phosphorylated by CheA. Phosphorylation of the N-terminal regulatory domain activates the methylesterase activity.

Its subcellular location is the cytoplasm. It carries out the reaction [protein]-L-glutamate 5-O-methyl ester + H2O = L-glutamyl-[protein] + methanol + H(+). The enzyme catalyses L-glutaminyl-[protein] + H2O = L-glutamyl-[protein] + NH4(+). Involved in chemotaxis. Part of a chemotaxis signal transduction system that modulates chemotaxis in response to various stimuli. Catalyzes the demethylation of specific methylglutamate residues introduced into the chemoreceptors (methyl-accepting chemotaxis proteins or MCP) by CheR. Also mediates the irreversible deamidation of specific glutamine residues to glutamic acid. This Rhizobium johnstonii (strain DSM 114642 / LMG 32736 / 3841) (Rhizobium leguminosarum bv. viciae) protein is Protein-glutamate methylesterase/protein-glutamine glutaminase 2.